The following is a 351-amino-acid chain: Hydroxymethylglutaryl-CoA synthase (351 aa).

(3S)-3-hydroxy-3-methylglutaryl-CoA is bound at residue D28. E80 functions as the Proton donor/acceptor in the catalytic mechanism. 2 residues coordinate (3S)-3-hydroxy-3-methylglutaryl-CoA: C112 and T153. C112 (acyl-thioester intermediate) is an active-site residue. A CoA-binding site is contributed by R199. 2 residues coordinate (3S)-3-hydroxy-3-methylglutaryl-CoA: T201 and H234. The active-site Proton donor/acceptor is H234. A CoA-binding site is contributed by K239. The (3S)-3-hydroxy-3-methylglutaryl-CoA site is built by R243, N266, and S296.

It belongs to the thiolase-like superfamily. Archaeal HMG-CoA synthase family. As to quaternary structure, interacts with acetoacetyl-CoA thiolase that catalyzes the precedent step in the pathway and with a DUF35 protein. The acetoacetyl-CoA thiolase/HMG-CoA synthase complex channels the intermediate via a fused CoA-binding site, which allows for efficient coupling of the endergonic thiolase reaction with the exergonic HMGCS reaction.

It catalyses the reaction acetoacetyl-CoA + acetyl-CoA + H2O = (3S)-3-hydroxy-3-methylglutaryl-CoA + CoA + H(+). It participates in metabolic intermediate biosynthesis; (R)-mevalonate biosynthesis; (R)-mevalonate from acetyl-CoA: step 2/3. In terms of biological role, catalyzes the condensation of acetyl-CoA with acetoacetyl-CoA to form 3-hydroxy-3-methylglutaryl-CoA (HMG-CoA). Functions in the mevalonate (MVA) pathway leading to isopentenyl diphosphate (IPP), a key precursor for the biosynthesis of isoprenoid compounds that are building blocks of archaeal membrane lipids. The sequence is that of Hydroxymethylglutaryl-CoA synthase from Picrophilus torridus (strain ATCC 700027 / DSM 9790 / JCM 10055 / NBRC 100828 / KAW 2/3).